The sequence spans 210 residues: Large ribosomal subunit protein uL3 (210 aa).

The interval 119–151 is disordered; sequence FQGAIKRHGQSRGPMSHGSRYHRRPGSMGPVAP.

Belongs to the universal ribosomal protein uL3 family. Part of the 50S ribosomal subunit. Forms a cluster with proteins L14 and L19.

In terms of biological role, one of the primary rRNA binding proteins, it binds directly near the 3'-end of the 23S rRNA, where it nucleates assembly of the 50S subunit. In Bacillus cytotoxicus (strain DSM 22905 / CIP 110041 / 391-98 / NVH 391-98), this protein is Large ribosomal subunit protein uL3.